We begin with the raw amino-acid sequence, 154 residues long: uncharacterized protein (154 aa).

3 helical membrane-spanning segments follow: residues 26-48, 97-119, and 132-150; these read VSGW…GVVT, IAMF…LIVF, and GLYT…YCAW.

The protein localises to the cell membrane. This is an uncharacterized protein from Archaeoglobus fulgidus (strain ATCC 49558 / DSM 4304 / JCM 9628 / NBRC 100126 / VC-16).